Reading from the N-terminus, the 223-residue chain is CKLF-like MARVEL transmembrane domain-containing protein 5 (223 aa).

Positions Phe-29–Met-213 constitute an MARVEL domain. Helical transmembrane passes span Gly-35–Ser-55, Ile-56–Leu-76, Phe-162–Ser-182, and Ala-186–Phe-206.

The protein belongs to the chemokine-like factor family. Highly expressed in the brain.

It is found in the membrane. The chain is CKLF-like MARVEL transmembrane domain-containing protein 5 (CMTM5) from Homo sapiens (Human).